Here is a 208-residue protein sequence, read N- to C-terminus: Ribosomal RNA large subunit methyltransferase E (208 aa).

S-adenosyl-L-methionine-binding residues include Gly-62, Trp-64, Asp-82, Asp-98, and Asp-123. The active-site Proton acceptor is Lys-163.

It belongs to the class I-like SAM-binding methyltransferase superfamily. RNA methyltransferase RlmE family.

The protein resides in the cytoplasm. It catalyses the reaction uridine(2552) in 23S rRNA + S-adenosyl-L-methionine = 2'-O-methyluridine(2552) in 23S rRNA + S-adenosyl-L-homocysteine + H(+). Its function is as follows. Specifically methylates the uridine in position 2552 of 23S rRNA at the 2'-O position of the ribose in the fully assembled 50S ribosomal subunit. This is Ribosomal RNA large subunit methyltransferase E from Edwardsiella ictaluri (strain 93-146).